Here is a 276-residue protein sequence, read N- to C-terminus: Digeranylgeranylglyceryl phosphate synthase (276 aa).

The next 7 helical transmembrane spans lie at 14-34 (NCILAGIVGLLGSIVALGHFP), 40-60 (LLIFLVVTVGCAGGNTINDYF), 92-112 (FAVGLALAYMINIYAFILGVI), 146-166 (GAVAVEHLGLAGYLAICAFLV), 202-222 (VGVLFALLTVIASFLPVKASV), 224-244 (VGYYAMVPVDLLILYAAYLIL), and 256-276 (QKLLKMSIFLAVMAFLIAAIV).

It belongs to the UbiA prenyltransferase family. DGGGP synthase subfamily. The cofactor is Mg(2+).

The protein localises to the cell membrane. It carries out the reaction sn-3-O-(geranylgeranyl)glycerol 1-phosphate + (2E,6E,10E)-geranylgeranyl diphosphate = 2,3-bis-O-(geranylgeranyl)-sn-glycerol 1-phosphate + diphosphate. The protein operates within membrane lipid metabolism; glycerophospholipid metabolism. Functionally, prenyltransferase that catalyzes the transfer of the geranylgeranyl moiety of geranylgeranyl diphosphate (GGPP) to the C2 hydroxyl of (S)-3-O-geranylgeranylglyceryl phosphate (GGGP). This reaction is the second ether-bond-formation step in the biosynthesis of archaeal membrane lipids. The protein is Digeranylgeranylglyceryl phosphate synthase of Thermococcus onnurineus (strain NA1).